A 392-amino-acid chain; its full sequence is Sterol methyltransferase-like 3 (392 aa).

A helical membrane pass occupies residues 20 to 42; the sequence is VTPWQAAAGVTAAIFIGSYLWHS.

It belongs to the class I-like SAM-binding methyltransferase superfamily. Erg6/SMT family.

Its subcellular location is the microsome membrane. Its function is as follows. Unable to convert squalene, botryococcene, cycloartenol, zymosterol or lanosterol to mono-, di-, tri- or tetramethylated derivatives. This chain is Sterol methyltransferase-like 3 (SMT-3), found in Botryococcus braunii (Green alga).